A 208-amino-acid polypeptide reads, in one-letter code: Uracil phosphoribosyltransferase (208 aa).

Residues R78, R103, and 130–138 contribute to the 5-phospho-alpha-D-ribose 1-diphosphate site; that span reads DPMLATGGT. Uracil contacts are provided by residues I193 and 198-200; that span reads GDA. A 5-phospho-alpha-D-ribose 1-diphosphate-binding site is contributed by D199.

This sequence belongs to the UPRTase family. Mg(2+) is required as a cofactor.

It catalyses the reaction UMP + diphosphate = 5-phospho-alpha-D-ribose 1-diphosphate + uracil. The protein operates within pyrimidine metabolism; UMP biosynthesis via salvage pathway; UMP from uracil: step 1/1. Allosterically activated by GTP. Catalyzes the conversion of uracil and 5-phospho-alpha-D-ribose 1-diphosphate (PRPP) to UMP and diphosphate. This Desulforapulum autotrophicum (strain ATCC 43914 / DSM 3382 / VKM B-1955 / HRM2) (Desulfobacterium autotrophicum) protein is Uracil phosphoribosyltransferase.